A 257-amino-acid polypeptide reads, in one-letter code: Glutamate racemase (257 aa).

Residues 12–13 (DS) and 44–45 (YG) contribute to the substrate site. C75 functions as the Proton donor/acceptor in the catalytic mechanism. Residue 76–77 (NT) coordinates substrate. The Proton donor/acceptor role is filled by C185. Position 186 to 187 (186 to 187 (TH)) interacts with substrate.

Belongs to the aspartate/glutamate racemases family.

The enzyme catalyses L-glutamate = D-glutamate. The protein operates within cell wall biogenesis; peptidoglycan biosynthesis. Provides the (R)-glutamate required for cell wall biosynthesis. The protein is Glutamate racemase of Clostridium botulinum (strain 657 / Type Ba4).